The primary structure comprises 905 residues: Methionine--tRNA ligase, cytoplasmic (905 aa).

The 75-residue stretch at 1–75 folds into the GST N-terminal domain; sequence MKLFVGEGNP…YFYLSSGHDM (75 aa). In terms of domain architecture, GST C-terminal spans 72–199; the sequence is GHDMCDLSNQ…DKGSSVFKPF (128 aa). A 'HIGH' region motif is present at residues 271–281; it reads PYVNNVPHLGN. The short motif at 591–595 is the 'KMSKS' region element; the sequence is KFSKS. ATP is bound at residue lysine 594. Disordered regions lie at residues 813–874 and 886–905; these read RFGG…VIDP and LALA…KKKK. Positions 841-874 are enriched in basic and acidic residues; sequence GPERVKELMQELEKQGNHVRELKGKKAEKSVIDP. One can recognise a WHEP-TRS domain in the interval 844-900; the sequence is RVKELMQELEKQGNHVRELKGKKAEKSVIDPEVQKLLALKKELALAEGKSPDPPTQK.

This sequence belongs to the class-I aminoacyl-tRNA synthetase family. As to quaternary structure, monomer. Part of a multisubunit complex that groups tRNA ligases for Arg (RARS1), Asp (DARS1), Gln (QARS1), Ile (IARS1), Leu (LARS1), Lys (KARS1), Met (MARS1) the bifunctional ligase for Glu and Pro (EPRS1) and the auxiliary subunits AIMP1/p43, AIMP2/p38 and EEF1E1/p18.

It is found in the cytoplasm. It localises to the cytosol. The protein localises to the nucleus. Its subcellular location is the nucleolus. The enzyme catalyses tRNA(Met) + L-methionine + ATP = L-methionyl-tRNA(Met) + AMP + diphosphate. Catalyzes the specific attachment of an amino acid to its cognate tRNA in a 2 step reaction: the amino acid (AA) is first activated by ATP to form AA-AMP and then transferred to the acceptor end of the tRNA. Plays a role in the synthesis of ribosomal RNA in the nucleolus. The protein is Methionine--tRNA ligase, cytoplasmic (mars1) of Xenopus laevis (African clawed frog).